The following is a 196-amino-acid chain: Alpha-crystallin A chain (196 aa).

At methionine 1 the chain carries N-acetylmethionine. The interval 1–63 is required for complex formation with BFSP1 and BFSP2; sequence MDVTIQHPWF…RTVLDSGISE (63 aa). Glutamine 6 is modified (deamidated glutamine; partial). At serine 45 the chain carries Phosphoserine. Glutamine 50 bears the Deamidated glutamine; partial mark. Residues 76–185 form the sHSP domain; that stretch reads HAGNPKNNPG…GHSERAIPVS (110 aa). N6-acetyllysine is present on residues lysine 93 and lysine 122. Residue histidine 123 participates in Zn(2+) binding. A Deamidated asparagine; partial modification is found at asparagine 124. Residues glutamate 125 and histidine 130 each contribute to the Zn(2+) site. Serine 145 is subject to Phosphoserine. A Deamidated asparagine; partial modification is found at asparagine 146. Residues 168-196 form a disordered region; that stretch reads KVQSGLDAGHSERAIPVSREEKPSSAPSS. Position 170 is a deamidated glutamine; partial (glutamine 170). A compositionally biased stretch (basic and acidic residues) spans 176–190; it reads GHSERAIPVSREEKP. A Zn(2+)-binding site is contributed by histidine 177. Serine 185 is a glycosylation site (O-linked (GlcNAc) serine).

The protein belongs to the small heat shock protein (HSP20) family. As to quaternary structure, heteropolymer composed of three CRYAA and one CRYAB subunits. Inter-subunit bridging via zinc ions enhances stability, which is crucial as there is no protein turn over in the lens. Can also form homodimers and homotetramers (dimers of dimers) which serve as the building blocks of homooligomers. Within homooligomers, the zinc-binding motif is created from residues of 3 different molecules. His-123 and Glu-125 from one molecule are ligands of the zinc ion, and His-130 and His-177 residues from additional molecules complete the site with tetrahedral coordination geometry. Part of a complex required for lens intermediate filament formation composed of BFSP1, BFSP2 and CRYAA. Post-translationally, acetylation at Lys-93 may increase chaperone activity. Undergoes age-dependent proteolytical cleavage at the C-terminus. Cleavage by m-calpain produces specifically alpha-crystallin A(1-162), cleavage by Capn3/Lp82 produces specifically alpha-crystallin A(1-168) which is the major truncated form during normal maturation and induced cataract formation. In terms of tissue distribution, highly expressed in eye lens. Also expressed in non-lenticular tissues such as brain, spleen, liver, lung, skin, small intestine and a several epithelial and fibroblast cell lines with highest levels in spleen.

The protein localises to the cytoplasm. It localises to the nucleus. Contributes to the transparency and refractive index of the lens. Acts as a chaperone, preventing aggregation of various proteins under a wide range of stress conditions. Required for the correct formation of lens intermediate filaments as part of a complex composed of BFSP1, BFSP2 and CRYAA. Functionally, inhibits bacterial growth in the lens. The protein is Alpha-crystallin A chain (Cryaa) of Rattus norvegicus (Rat).